The sequence spans 558 residues: Formate--tetrahydrofolate ligase (558 aa).

Position 67-74 (67-74 (TPAGEGKT)) interacts with ATP.

This sequence belongs to the formate--tetrahydrofolate ligase family.

It catalyses the reaction (6S)-5,6,7,8-tetrahydrofolate + formate + ATP = (6R)-10-formyltetrahydrofolate + ADP + phosphate. It participates in one-carbon metabolism; tetrahydrofolate interconversion. This is Formate--tetrahydrofolate ligase from Sphingobium sp. (strain NBRC 103272 / SYK-6).